The chain runs to 472 residues: MAKDTSYDAVMDRRAEIMSRALGLNYDEFIISDIAFDYEGMMAKAGYSLEEVRQIQSESGVGNTPLLELRNITDLARKTSKRGFGARILIKDEAANPSGSFKDRRASVSIHHAKKLGYPGVLAATSGNYGAAVASQAAMKNLGCIIVQEVFDSRHVGQPEIIEKSRKCEAYGAEVVQLTVGPELFYVSLILLEETGYFNASLYSPFGISGVETLGYELVEQIRARYDKDPAYIVVTHAGGGNVTGTARGALKAGAKNSTIIGASVDLSGLHMASDNDFNKKSFTTGHTGFGVPFATWPDRTDVPKNAARPLRYLDRYVTVTQGEVFYVTEALAQVEGMERGPAGNTSLAAAIALARELPEDEIVVVQETEYTGAGKHPWAQLDFAKQNGIAVKRGAPKENKPGKTIVIPQNFSQITATEMDLNRMRRSYIRNALERNKVKNVTEEDIRFLAEDTKTDADFVTSVIRDLGVRL.

N6-(pyridoxal phosphate)lysine is present on lysine 102. Pyridoxal 5'-phosphate-binding positions include asparagine 128 and 238 to 242 (AGGGN).

Belongs to the threonine synthase family. As to quaternary structure, heterodimer with OrtA. Pyridoxal 5'-phosphate is required as a cofactor.

The enzyme catalyses D-alanine + acetyl-CoA = (2R)-2-amino-4-oxopentanoate + CoA. Involved in the ornithine fermentation pathway. Catalyzes the thiolytic cleavage of 2-amino-4-ketopentanoate (AKP) with coenzyme A (CoA) to form acetyl-CoA and alanine. It is strictly specific for AKP. This Unknown prokaryotic organism protein is 2-amino-4-ketopentanoate thiolase beta subunit.